We begin with the raw amino-acid sequence, 709 residues long: Homeobox-leucine zipper protein HDG4 (709 aa).

The disordered stretch occupies residues Glu61–Tyr92. Positions Lys88–Gln147 form a DNA-binding region, homeobox. A coiled-coil region spans residues Gln137–Met205. The START domain occupies Ala229 to Ser466.

This sequence belongs to the HD-ZIP homeobox family. Class IV subfamily. In terms of tissue distribution, expressed in flowers.

It localises to the nucleus. Functionally, probable transcription factor. This is Homeobox-leucine zipper protein HDG4 from Arabidopsis thaliana (Mouse-ear cress).